A 339-amino-acid polypeptide reads, in one-letter code: 7,8-didemethyl-8-hydroxy-5-deazariboflavin synthase (339 aa).

Positions 13–258 constitute a Radical SAM core domain; it reads ITYSKNIFIP…RDTDVSIQVP (246 aa). [4Fe-4S] cluster is bound by residues Cys-27, Cys-31, and Cys-34.

It belongs to the radical SAM superfamily. CofG family. Consists of two subunits, CofG and CofH. [4Fe-4S] cluster serves as cofactor.

It carries out the reaction 5-amino-5-(4-hydroxybenzyl)-6-(D-ribitylimino)-5,6-dihydrouracil + S-adenosyl-L-methionine = 7,8-didemethyl-8-hydroxy-5-deazariboflavin + 5'-deoxyadenosine + L-methionine + NH4(+) + H(+). The protein operates within cofactor biosynthesis; coenzyme F0 biosynthesis. Catalyzes the radical-mediated synthesis of 7,8-didemethyl-8-hydroxy-5-deazariboflavin from 5-amino-5-(4-hydroxybenzyl)-6-(D-ribitylimino)-5,6-dihydrouracil. The protein is 7,8-didemethyl-8-hydroxy-5-deazariboflavin synthase of Methanobrevibacter smithii (strain ATCC 35061 / DSM 861 / OCM 144 / PS).